We begin with the raw amino-acid sequence, 1529 residues long: ABC multidrug transporter AFR2 (1529 aa).

Positions 1–10 are enriched in gly residues; the sequence is MAFAGVGQGL. The disordered stretch occupies residues 1–21; it reads MAFAGVGQGLGTYDRTEQTSG. The 251-residue stretch at 144–394 folds into the ABC transporter 1 domain; that stretch reads GALRDLISNR…FVDMGFHCPS (251 aa). N235 and N318 each carry an N-linked (GlcNAc...) asparagine glycan. 5 helical membrane passes run 505 to 525, 539 to 559, 589 to 609, 614 to 634, and 648 to 668; these read LTLT…SVFY, ALLF…ILIL, IPYK…MTNL, GPYF…SMLF, and LAPA…AVNV. A glycan (N-linked (GlcNAc...) asparagine) is linked at N742. The chain crosses the membrane as a helical span at residues 757–777; the sequence is GILIGFFLFFTAIYMTATEFI. The ABC transporter 2 domain maps to 845-1087; sequence FSWKDVVYDI…ILIDYFEKNG (243 aa). 881–888 lines the ATP pocket; sequence GVSGAGKT. A run of 5 helical transmembrane segments spans residues 1193–1213, 1227–1247, 1268–1288, 1314–1334, and 1353–1373; these read YIWS…FSFF, FSVF…MPNF, IFIL…GAVI, LMFL…IMIV, and MCLI…FWMF. The N-linked (GlcNAc...) asparagine glycan is linked to N1434. The helical transmembrane segment at 1465–1485 threads the bilayer; the sequence is FGLLWAYVVFNIIAAVGIYWL. The tract at residues 1493–1529 is disordered; the sequence is GKEQASEPEGVQEKLVPAQSSEKKRESVSRGSESTAA.

The protein belongs to the ABC transporter superfamily. ABCG family. PDR (TC 3.A.1.205) subfamily.

It is found in the cell membrane. It carries out the reaction itraconazole(in) + ATP + H2O = itraconazole(out) + ADP + phosphate + H(+). The catalysed reaction is voriconazole(in) + ATP + H2O = voriconazole(out) + ADP + phosphate + H(+). The enzyme catalyses fluconazole(in) + ATP + H2O = fluconazole(out) + ADP + phosphate + H(+). Functionally, pleiotropic ABC efflux transporter that confers resistance to structurally and functionally unrelated compounds including azoles such as fluconazole (FLC), itraconazole (ITC), posaconazole (POS), and voriconazole (VRC). The protein is ABC multidrug transporter AFR2 of Cryptococcus neoformans var. grubii serotype A (strain H99 / ATCC 208821 / CBS 10515 / FGSC 9487) (Filobasidiella neoformans var. grubii).